A 1214-amino-acid polypeptide reads, in one-letter code: Inner capsid protein VP3 (1214 aa).

Residues 1–80 (MPRRSARKAQ…SVNNDGDIIT (80 aa)) form a disordered region. Polar residues predominate over residues 8–18 (KAQSATASPAD). The segment covering 28-51 (PTTNSPPSTTSPNQAAADANQQQA) has biased composition (low complexity). The segment at 117 to 140 (YVCNVCNARFSTMSALSEHLRSDH) adopts a C2H2-type zinc-finger fold.

The protein belongs to the turreted BTV-fold inner capsid family. In terms of assembly, homodecamer; each decamer is made up of two conformers of VP2, called VP2A and VP2B. 12 homodecamers assemble to form an icosahedral capsid. Interacts with VP6.

The protein localises to the virion. Its function is as follows. Inner capsid protein that self-assembles to form an icosahedral capsid with a T=2 symmetry, which consists of 120 copies of VP2, with channels at each of its five-fold vertices. This capsid constitutes the innermost concentric layer of the viral mature particle. This is Inner capsid protein VP3 (S3) from Notemigonus crysoleucas (Golden shiner).